Reading from the N-terminus, the 262-residue chain is Tropinone reductase homolog At2g30670 (262 aa).

13–37 (LVTGGASGIGHAIVEELAGLGARIY) serves as a coordination point for NADP(+). Serine 146 is a binding site for substrate. The active-site Proton acceptor is the tyrosine 159.

This sequence belongs to the short-chain dehydrogenases/reductases (SDR) family. SDR65C subfamily.

The polypeptide is Tropinone reductase homolog At2g30670 (Arabidopsis thaliana (Mouse-ear cress)).